Here is a 1587-residue protein sequence, read N- to C-terminus: MLFEMTPETFKKVNSSNRIIKGLQYTPLASSIPLENGLQNVLYPSSKFQNEPLQLNSEESSIMQRYVDMLNPGATFVNDSETFNFYKNALSAMITEPAMPAMRVNASPVLDQKVCNSDSLSELNDFTKSLIQPSMLMCEPKEKPDASSINTNRSSSDNGFLTPSSSPRSPSCSRVFNAVQLCSPKKSKDDITTPKKRLMEDTYSPRESPSKIQRLQDVLLKQLQDTRLLISQVIEAENSEDFSSNSLFIKREDDDGKHISSHAIEKLYMALTKLSRLGACDKLLEEGSIILVKQILEKELKELPVACYSIINLHDSLTQFPNLDFILKTTALVLFIIFLVPSFKKLQNEESILHLLNILHSIFEYTVPEAIDNIVQSKTSDARTSEIQHLSVLLQKVANVLNILSKVAHEIPLSEAVVIRIVYLFPKVSTLDNSFKTKLPNCNSSSFDFLKAPLFQTLQYLFRLYPYQRDFIIEESLTNFSHLPTARSVSRTYRLSNGKSIQYYSTLFVRLIQSCSIQNLFDSEIVQSESKSTEALHSGNLTEHLKTVESILSKSRHEEYRIANHIVAYLLSRSLKQNKTESDNSFAILTKILLEDLLNMLSLPEWCGTETIIRQFAMNLVMTVTNDKQAVSSKNAALDLISLIVNKVLALFDLSLFEKHNIPAPTNFNDIISFIPSITRLNELSQVSFNHFYFLCKGDISLENILPYNYNKWFSFLLQLRKVCNDSEALKIIDNCIDKNMQKSQEGFQGPSPFKADENDEDIFIISLYHSSLFLNLKFFVSLIIGFLDSPQASLRTKCLRIINQMKTIPSILRTHPEVLAQIISKSNDQSAIVRDTVLDLLGTYIMAYRETIPQIYGCIISGISDPSTIVRKRAIKQLCEVYEATEDLNIRVDIASKLLTRSNDEEETISELSLEVLEKLWFSPASNELDCQKGYEQLTFLEKQKLRVQYFPILKLCAEPSTERHVLLVTSLKTMLTSKEEINLSTLHTQIRLLLSCLFNQLIEVVTEDQVDESTKGILYEIMSTLFVFSRAFPFLFDLSYLHLLKPYLRSASTIEEQRFLYYVVAIFRQVLPFQKEISESFLRSLESVLLQRLTKAGTATLMEIVPCLCSLFTRLNDYERLKKIVVSCLKSLEEARHSENNFQKMVRLIDLIGLFSRYGDLNRINDDWKHSLDFISPECDDAYVILLGYFQKLLKDAKGQLRIHIIDNMSRICLRETSLFISPLMLSTLDMIIAENNVNEVSVLFKSFLELLAADEDLIFEADQKLSLKGKQNVQSNKSVDRDMLKGTKDKQWIEGVSASLMQHFLPCILDSCFSKNLRYSMLGIEILKCIIHQGLVNPRMCFSTIIALESNAIKETREVAILLHTELHRRHESLIDGLYAQSADLIFSLQKTEEYQTFKLGEFSPFQSAYTIVSADKSSKSRKKLIMQILKPLKLDGIDLPSFTEEKVSFVSFCCVCLAGIPYVSIEEPLMIISTVDSVLATIGPTITGWMKKLDHERFKILAGINLCNLIYLKRYIKYAFSISDSSRPIREKKPLTLLNRGYVDLITSDAKPDIVSKLVIKLFEEENILSGEDQVEGEQLTVV.

The disordered stretch occupies residues 140–172 (PKEKPDASSINTNRSSSDNGFLTPSSSPRSPSC). A compositionally biased stretch (polar residues) spans 147–162 (SSINTNRSSSDNGFLT). The segment covering 163-172 (PSSSPRSPSC) has biased composition (low complexity). The residue at position 183 (Ser-183) is a Phosphoserine. HEAT repeat units lie at residues 775–812 (LNLK…IPSI), 814–851 (RTHP…AYRE), 853–888 (IPQI…ATED), 890–927 (NIRV…SPAS), 1101–1140 (ATLM…ARHS), and 1183–1220 (DAYV…RETS).

This sequence belongs to the SCC2/Nipped-B family. In terms of assembly, interacts with ssl3.

Its subcellular location is the nucleus. The protein localises to the chromosome. Functionally, plays a structural role in chromatin. Chromatid cohesion molecule required for equal sister chromatid separation in anaphase. May form a stable link between chromatids in S phase that is split rather than removed in anaphase. Also required for spindle-kinetochore interaction in early mitosis and inhibit sister chromatid separation until the cleavage of Rad21 in anaphase. This is Sister chromatid cohesion protein mis4 (mis4) from Schizosaccharomyces pombe (strain 972 / ATCC 24843) (Fission yeast).